We begin with the raw amino-acid sequence, 155 residues long: Endoribonuclease YbeY (155 aa).

Zn(2+) is bound by residues His115, His119, and His125.

The protein belongs to the endoribonuclease YbeY family. Zn(2+) is required as a cofactor.

It localises to the cytoplasm. Functionally, single strand-specific metallo-endoribonuclease involved in late-stage 70S ribosome quality control and in maturation of the 3' terminus of the 16S rRNA. The sequence is that of Endoribonuclease YbeY from Polynucleobacter asymbioticus (strain DSM 18221 / CIP 109841 / QLW-P1DMWA-1) (Polynucleobacter necessarius subsp. asymbioticus).